Reading from the N-terminus, the 422-residue chain is MKYYCETKSATDLTRKTLALVLAGGEGSRLKDLTKWRAKPAVPFGGKYRIIDFVLSNCVNSGIRKIGVLTQYKSHSLIRHVQRAWSFMRYEVGEFVELLPAQQRVDKGWYKGTADALYQNLDIMRRHTPDYVLVLGGDHIYSMDYSKMLYEHAESGADVTIGCIEVPRMEATGFGVMSVDECFKITKFTEKPANPDAMPHKPDKALASMGIYVFSTEFLFQKLIEDADNPNSSRDFGKDIIPSIIEDWQVRAFPFEDETGLPVYWRDVGTIESYWKASLDLCSITPDLNLYDEDWPIWTYQAQMPPAKFIFDDEGRRGEAIDSLVAGGCIISGARIKRSVISSGGHVHSFCLVKDSVLLPRVKVERNCRIQNAVIDKGCVIPEGTVIGEDLEADRKRFYVEEASGIVLVTPDMLGQRLHITR.

Residues Y110, G175, 190-191 (EK), and S208 each bind alpha-D-glucose 1-phosphate.

It belongs to the bacterial/plant glucose-1-phosphate adenylyltransferase family. Homotetramer.

It catalyses the reaction alpha-D-glucose 1-phosphate + ATP + H(+) = ADP-alpha-D-glucose + diphosphate. It participates in glycan biosynthesis; glycogen biosynthesis. Involved in the biosynthesis of ADP-glucose, a building block required for the elongation reactions to produce glycogen. Catalyzes the reaction between ATP and alpha-D-glucose 1-phosphate (G1P) to produce pyrophosphate and ADP-Glc. This chain is Glucose-1-phosphate adenylyltransferase, found in Hydrogenovibrio crunogenus (strain DSM 25203 / XCL-2) (Thiomicrospira crunogena).